The following is a 160-amino-acid chain: uncharacterized protein (160 aa).

It is found in the mitochondrion. This is an uncharacterized protein from Arabidopsis thaliana (Mouse-ear cress).